The sequence spans 303 residues: MAETNPELSDLMAQTNKKIVPKFTEIFPVEDVNYPYSAFIASVRKDVIKHCTDHKGIFQPVLPPEKKVPELWFYTELKTRTSSITLAIRMDNLYLVGFRTPGGVWWELARPATPTSSATTPGGSASAAGTRTSSATRVWRPSPWAARDDQGRQRPGEEEEDGDTGGGGGADADADAGGAELAAAAAAADPQADTKSKLVKLVVMVCEGLRFNTLSRTVDAGFNSQHGVTLTVTQGKQVQKWDRISKAAFEWADHPTAVIPDMQKLGIKDKNEAARIVALVKNQTTAAAAAATAASADNDDDEA.

Over residues alanine 112 to arginine 137 the composition is skewed to low complexity. The segment at alanine 112–aspartate 175 is disordered. Basic and acidic residues predominate over residues alanine 146–glycine 156.

Belongs to the ribosome-inactivating protein family. Type 1 RIP subfamily. Monomer. As to expression, endosperm.

The protein localises to the cytoplasm. The enzyme catalyses Endohydrolysis of the N-glycosidic bond at one specific adenosine on the 28S rRNA.. Functionally, a possible regulatory factor for the synthesis of zeins, the major group of storage proteins. In Zea mays (Maize), this protein is Albumin b-32 (O6).